The chain runs to 271 residues: Glutamate racemase (271 aa).

Substrate-binding positions include 10–11 and 42–43; these read DS and YG. C73 functions as the Proton donor/acceptor in the catalytic mechanism. 74 to 75 contacts substrate; the sequence is NT. C183 serves as the catalytic Proton donor/acceptor. 184-185 serves as a coordination point for substrate; that stretch reads TH.

The protein belongs to the aspartate/glutamate racemases family.

The enzyme catalyses L-glutamate = D-glutamate. Its pathway is cell wall biogenesis; peptidoglycan biosynthesis. Functionally, provides the (R)-glutamate required for cell wall biosynthesis. The protein is Glutamate racemase of Streptococcus thermophilus (strain ATCC BAA-250 / LMG 18311).